The primary structure comprises 392 residues: Branched-chain-amino-acid aminotransferase, mitochondrial (392 aa).

The N-terminal 27 residues, 1-27 (MAAAALGQIWARKLLSVPWLLCGPRRY), are a transit peptide targeting the mitochondrion. Tyrosine 168 provides a ligand contact to substrate. The residue at position 229 (lysine 229) is an N6-(pyridoxal phosphate)lysine. Lysine 321 is modified (N6-acetyllysine).

This sequence belongs to the class-IV pyridoxal-phosphate-dependent aminotransferase family. As to quaternary structure, homodimer. The cofactor is pyridoxal 5'-phosphate. As to expression, ubiquitous.

It is found in the mitochondrion. The enzyme catalyses L-leucine + 2-oxoglutarate = 4-methyl-2-oxopentanoate + L-glutamate. It carries out the reaction L-isoleucine + 2-oxoglutarate = (S)-3-methyl-2-oxopentanoate + L-glutamate. It catalyses the reaction L-valine + 2-oxoglutarate = 3-methyl-2-oxobutanoate + L-glutamate. Its function is as follows. Catalyzes the first reaction in the catabolism of the essential branched chain amino acids leucine, isoleucine, and valine. May also function as a transporter of branched chain alpha-keto acids. This Homo sapiens (Human) protein is Branched-chain-amino-acid aminotransferase, mitochondrial (BCAT2).